Reading from the N-terminus, the 154-residue chain is Ribosome maturation factor RimP (154 aa).

The protein belongs to the RimP family.

It is found in the cytoplasm. In terms of biological role, required for maturation of 30S ribosomal subunits. The polypeptide is Ribosome maturation factor RimP (Flavobacterium psychrophilum (strain ATCC 49511 / DSM 21280 / CIP 103535 / JIP02/86)).